The primary structure comprises 370 residues: ATP/GTP phosphatase (370 aa).

It carries out the reaction ATP + H2O = ADP + phosphate + H(+). The catalysed reaction is GTP + H2O = GDP + phosphate + H(+). In terms of biological role, has nucleotide phosphatase activity toward ATP and GTP, but not toward CTP, TTP and ADP. This is ATP/GTP phosphatase from Helicobacter pylori (strain ATCC 700392 / 26695) (Campylobacter pylori).